A 1302-amino-acid polypeptide reads, in one-letter code: Ubiquitin conjugation factor E4 B (1302 aa).

The residue at position 1 (M1) is an N-acetylmethionine. The segment at 1-155 (MEELSADEIR…EPSSGPEVSE (155 aa)) is disordered. Positions 16–33 (RLAGGQTSQPTTPLTSPQ) are enriched in low complexity. Phosphoserine occurs at positions 23 and 31. A compositionally biased stretch (polar residues) spans 51–64 (QSLGLNVHNMTPAT). A compositionally biased stretch (low complexity) spans 76–99 (SQSSEGVSSLSSSPSNSLETQSQS). Phosphoserine occurs at positions 84, 88, 90, 101, 103, 105, and 124. A compositionally biased stretch (basic and acidic residues) spans 134–147 (NDRREKRSLSDKEP). A Phosphoserine modification is found at S238. Residues 299 to 327 (AASQLAVPSTPLSPHSAASGTAAGSQPSS) are compositionally biased toward polar residues. Residues 299–406 (AASQLAVPST…SPSLGASGGA (108 aa)) form a disordered region. Over residues 340–374 (ASSGVSILSSSPSPPALASSPQAVPASSSRQRPSS) the composition is skewed to low complexity. Residue S383 is modified to Phosphoserine. Low complexity predominate over residues 384-400 (PSATSRRPSSLRISPSL). A phosphoserine mark is found at S803 and S969. The tract at residues 1057-1077 (NKEQWDQLPRDQQQARQSQLA) is disordered. Over residues 1066–1077 (RDQQQARQSQLA) the composition is skewed to low complexity. Residues 1227–1300 (DAPDEFRDPL…QAWMREKQNS (74 aa)) enclose the U-box domain. Phosphoserine is present on S1265.

Belongs to the ubiquitin conjugation factor E4 family. Interacts with VCP/p97. Interacts with STUB1/CHIP and UNC45B. Post-translationally, proteolytically cleaved by caspases during apoptosis. Cleaved efficiently at Asp-123 by caspase-6 and granzyme B. Cleaved with approximately 10-fold less efficiency at Asp-109 by caspase-3 and caspase-7. In terms of tissue distribution, expressed in differentiated myotubes (at protein level). Highest expression in ovary, testis, heart and skeletal muscle. Expression is low in colon, thymus and peripheral blood leukocytes. Almost undetectable in lung and spleen.

Its subcellular location is the cytoplasm. The protein localises to the nucleus. It catalyses the reaction S-ubiquitinyl-[E2 ubiquitin-conjugating enzyme]-L-cysteine + [acceptor protein]-L-lysine = [E2 ubiquitin-conjugating enzyme]-L-cysteine + N(6)-ubiquitinyl-[acceptor protein]-L-lysine.. Its pathway is protein modification; protein ubiquitination. Functionally, ubiquitin-protein ligase that probably functions as an E3 ligase in conjunction with specific E1 and E2 ligases. May also function as an E4 ligase mediating the assembly of polyubiquitin chains on substrates ubiquitinated by another E3 ubiquitin ligase. May regulate myosin assembly in striated muscles together with STUB1 and VCP/p97 by targeting myosin chaperone UNC45B for proteasomal degradation. This Homo sapiens (Human) protein is Ubiquitin conjugation factor E4 B.